Consider the following 214-residue polypeptide: 3-isopropylmalate dehydratase small subunit (214 aa).

Belongs to the LeuD family. LeuD type 1 subfamily. As to quaternary structure, heterodimer of LeuC and LeuD.

It catalyses the reaction (2R,3S)-3-isopropylmalate = (2S)-2-isopropylmalate. It participates in amino-acid biosynthesis; L-leucine biosynthesis; L-leucine from 3-methyl-2-oxobutanoate: step 2/4. In terms of biological role, catalyzes the isomerization between 2-isopropylmalate and 3-isopropylmalate, via the formation of 2-isopropylmaleate. This is 3-isopropylmalate dehydratase small subunit from Pseudomonas fluorescens (strain ATCC BAA-477 / NRRL B-23932 / Pf-5).